Here is a 140-residue protein sequence, read N- to C-terminus: Large ribosomal subunit protein bL17 (140 aa).

The protein belongs to the bacterial ribosomal protein bL17 family. In terms of assembly, part of the 50S ribosomal subunit. Contacts protein L32.

The sequence is that of Large ribosomal subunit protein bL17 from Hyphomonas neptunium (strain ATCC 15444).